The sequence spans 102 residues: MIVPLLHILILAGILFVLGLVCTMVWRMNIIMMLIGIEIMLNAAMLAFVGAANRWGTADGQVFSLMIMAMTSAEVSLALALVVYLHRWRKTVNADDFNSMKG.

3 helical membrane passes run 1 to 21, 30 to 50, and 65 to 85; these read MIVPLLHILILAGILFVLGLV, IIMMLIGIEIMLNAAMLAFVG, and LMIMAMTSAEVSLALALVVYL.

Belongs to the complex I subunit 4L family. As to quaternary structure, NDH-1 is composed of 14 different subunits. Subunits NuoA, H, J, K, L, M, N constitute the membrane sector of the complex.

Its subcellular location is the cell inner membrane. The catalysed reaction is a quinone + NADH + 5 H(+)(in) = a quinol + NAD(+) + 4 H(+)(out). In terms of biological role, NDH-1 shuttles electrons from NADH, via FMN and iron-sulfur (Fe-S) centers, to quinones in the respiratory chain. The immediate electron acceptor for the enzyme in this species is believed to be ubiquinone. Couples the redox reaction to proton translocation (for every two electrons transferred, four hydrogen ions are translocated across the cytoplasmic membrane), and thus conserves the redox energy in a proton gradient. The polypeptide is NADH-quinone oxidoreductase subunit K 2 (Geotalea daltonii (strain DSM 22248 / JCM 15807 / FRC-32) (Geobacter daltonii)).